Here is a 1095-residue protein sequence, read N- to C-terminus: Putative disease resistance protein At4g11170 (1095 aa).

The TIR domain occupies 9 to 173 (WRYDVFPSFR…TISKDVLEKL (165 aa)). Residue Glu84 is part of the active site. In terms of domain architecture, NB-ARC spans 168-454 (DVLEKLNATP…HENYLKQMII (287 aa)). LRR repeat units follow at residues 609–631 (CLVELNMSHSKLKKLWSGVQPLR), 632–654 (NLRTMNLNSSRNLEILPNLMEAT), 655–677 (KLNRLDLGWCESLVELPSSIKNL), 679–701 (HLILLEMSCCKKLEIIPTNINLP), 702–722 (SLEVLHFRYCTRLQTFPEIST), and 723–744 (NIRLLNLIGTAITEVPPSVKYW).

The catalysed reaction is NAD(+) + H2O = ADP-D-ribose + nicotinamide + H(+). This chain is Putative disease resistance protein At4g11170, found in Arabidopsis thaliana (Mouse-ear cress).